A 625-amino-acid chain; its full sequence is MLSRVKEGAREKIIKVIESLAPGWKGEIEFKDTPSPELGDFGTPVAFKLARVMKKPPFQIAELIVEELKKELPEGIREVRAINGYVNFFVDYGYLARQLIVEVLEKGDRFGSSDIGRGKKVIVEHTSVNPTKPLHMGHARNAILGDSMARILRFLGYEVEVQNYIDDLGIQFAQVYWGYLKLREKFEKIMKELKEKGIKEDPIDHVLGLLYVEVNRVLEENPEIEAEIRDIMKKLESGELNGRELAESVVRAQMVTTYRLGIKYDLLVWESDIVSRKLFEIAVKLLERNENFYTPNEGKYKGAFVMDLSKLFPDMKNPYLVLRRSDGTATYTGKDIAYHLWKFGKIDVDLLYKPWDEHTWTTAPDGESVKGKFGGADIVINVIGAEQRHPQMAIKHALKLLGFEDAAENLHHLAYEHVERPEGKFSGRKGTWVGFTVDEVINEAIKRARELIEEKSPGLSDEEKEEIAEKVGVGAIRYNMVKYSPDKKIIFRWEDVLNFEGESAPYIQYAHARCSSILRKAGNPEWEALLKEANFKELTERERELIILLSKFPEVVEQAGRDVKPHLIAWYANELASLFNKFYMDHPVIKAEKGIREARLLLVMAVRQVLRNSLWLLGIEAPDRM.

The 'HIGH' region motif lies at 128–138; the sequence is VNPTKPLHMGH.

The protein belongs to the class-I aminoacyl-tRNA synthetase family.

It localises to the cytoplasm. It catalyses the reaction tRNA(Arg) + L-arginine + ATP = L-arginyl-tRNA(Arg) + AMP + diphosphate. This Pyrococcus abyssi (strain GE5 / Orsay) protein is Arginine--tRNA ligase (argS).